The sequence spans 400 residues: Octopine dehydrogenase (400 aa).

Residues 10 to 13 (GGNG) and 35 to 38 (FADE) each bind NADH. 2 residues coordinate pyruvate: Q118 and T143. Q118 contributes to the substrate binding site. C148 is a binding site for NAD(+). L-arginine is bound at residue M206. Residue H212 participates in pyruvate binding. The active site involves H212. NAD(+) is bound at residue R324.

This sequence belongs to the lysopine/nopaline/octopine/opine/vitopine dehydrogenases family.

It carries out the reaction D-octopine + NAD(+) + H2O = L-arginine + pyruvate + NADH + H(+). Catalyzes the reverse reaction of octopine dehydrogenation. Acts on L-arginine in preference to other substrates. The chain is Octopine dehydrogenase from Mizuhopecten yessoensis (Japanese scallop).